The sequence spans 353 residues: Tetrahedral aminopeptidase (353 aa).

The Zn(2+) site is built by His68 and Asp182. The Proton acceptor role is filled by Glu212. 3 residues coordinate Zn(2+): Glu213, Asp235, and His323.

The protein belongs to the peptidase M42 family. As to quaternary structure, homododecamer. The assembly of six dimers results in a tetrahedral-shaped structure; all 12 active sites are located on the inside of the tetrahedron. Substrate access is granted by four pores with a maximal diameter of 18 Angstroms, allowing only small peptides and unfolded proteins access to the active site. Beside the four entry ports, TET contains 12 small product release openings, which are large enough to allow passage of only single amino acid residues. Zn(2+) serves as cofactor. The cofactor is Co(2+).

Its activity is regulated as follows. Inhibited by EDTA and bestatin in vitro. Is insensitive to papain, antipain, chymostatin, leupeptin, pepstatin and aprotinin. Its function is as follows. Functions as an aminopeptidase, with a clear preference for leucine as the N-terminal amino acid. However, can also cleave moderately long polypeptide substrates of various compositions in a fairly unspecific manner. Has neither carboxypeptidase nor endoproteolytic activities, and it is devoid of N-terminal deblocking activity. Is involved in protein degradation, performing degradation of oligopeptides produced by the proteasome into single amino acids. In Pyrococcus horikoshii (strain ATCC 700860 / DSM 12428 / JCM 9974 / NBRC 100139 / OT-3), this protein is Tetrahedral aminopeptidase (frvX).